The sequence spans 208 residues: Protein-L-isoaspartate O-methyltransferase (208 aa).

S59 is a catalytic residue.

It belongs to the methyltransferase superfamily. L-isoaspartyl/D-aspartyl protein methyltransferase family.

Its subcellular location is the cytoplasm. It carries out the reaction [protein]-L-isoaspartate + S-adenosyl-L-methionine = [protein]-L-isoaspartate alpha-methyl ester + S-adenosyl-L-homocysteine. In terms of biological role, catalyzes the methyl esterification of L-isoaspartyl residues in peptides and proteins that result from spontaneous decomposition of normal L-aspartyl and L-asparaginyl residues. It plays a role in the repair and/or degradation of damaged proteins. This Vibrio parahaemolyticus serotype O3:K6 (strain RIMD 2210633) protein is Protein-L-isoaspartate O-methyltransferase.